A 237-amino-acid chain; its full sequence is Phosphoribosylaminoimidazole-succinocarboxamide synthase (237 aa).

Belongs to the SAICAR synthetase family.

It catalyses the reaction 5-amino-1-(5-phospho-D-ribosyl)imidazole-4-carboxylate + L-aspartate + ATP = (2S)-2-[5-amino-1-(5-phospho-beta-D-ribosyl)imidazole-4-carboxamido]succinate + ADP + phosphate + 2 H(+). Its pathway is purine metabolism; IMP biosynthesis via de novo pathway; 5-amino-1-(5-phospho-D-ribosyl)imidazole-4-carboxamide from 5-amino-1-(5-phospho-D-ribosyl)imidazole-4-carboxylate: step 1/2. The chain is Phosphoribosylaminoimidazole-succinocarboxamide synthase from Salmonella arizonae (strain ATCC BAA-731 / CDC346-86 / RSK2980).